We begin with the raw amino-acid sequence, 394 residues long: MQFVLVLNCGSSSLKFAVMNPTSGDVLLNGTAERLGHDVGSLTVKDESGKAVQEIKPGTHAQALELIVETLKTKNLMDKIAAVGHRLVHGGEFFKESVVINNEVREKVAECIRLAPLHNPANITGIEAALKVFPKLPQVGVFDTAFHQQMPEKAYLYPLPRKFYEEFHIRRYGFHGTSFRYIASQLESVTGLKNPRTVVCHLGNGGSLAAIKDGHSVDTTMGLTPLEGIVHGTRCGDIDPAIIQILQKQFHISATEMNEILWKKSGLLGLSGISNDCRSLEEAMAEGNEAAIRALEVYCYRLAKHIAAQMVALNGCDALVFTGGIGENSAFVRANTMEQLAFLGFELDKKANEETSRGKQGKISTANSKPVWVIPTNEELLIARDTAQLSGMTR.

Asn8 contacts Mg(2+). Residue Lys15 coordinates ATP. Arg86 lines the substrate pocket. Asp143 functions as the Proton donor/acceptor in the catalytic mechanism. Residues His201–Gly205, Asp276–Arg278, and Gly324–Asn328 each bind ATP. Residue Glu378 coordinates Mg(2+).

This sequence belongs to the acetokinase family. In terms of assembly, homodimer. Requires Mg(2+) as cofactor. Mn(2+) is required as a cofactor.

The protein resides in the cytoplasm. The enzyme catalyses acetate + ATP = acetyl phosphate + ADP. It participates in metabolic intermediate biosynthesis; acetyl-CoA biosynthesis; acetyl-CoA from acetate: step 1/2. Catalyzes the formation of acetyl phosphate from acetate and ATP. Can also catalyze the reverse reaction. This is Acetate kinase from Dichelobacter nodosus (strain VCS1703A).